The sequence spans 458 residues: UDP-N-acetylglucosamine 1-carboxyvinyltransferase (458 aa).

Position 22–23 (22–23 (KN)) interacts with phosphoenolpyruvate. Arg94 serves as a coordination point for UDP-N-acetyl-alpha-D-glucosamine. Asp119 acts as the Proton donor in catalysis. The UDP-N-acetyl-alpha-D-glucosamine site is built by Asp309 and Val331.

This sequence belongs to the EPSP synthase family. MurA subfamily.

The protein resides in the cytoplasm. The catalysed reaction is phosphoenolpyruvate + UDP-N-acetyl-alpha-D-glucosamine = UDP-N-acetyl-3-O-(1-carboxyvinyl)-alpha-D-glucosamine + phosphate. It participates in cell wall biogenesis; peptidoglycan biosynthesis. Cell wall formation. Adds enolpyruvyl to UDP-N-acetylglucosamine. The chain is UDP-N-acetylglucosamine 1-carboxyvinyltransferase from Chlamydia pneumoniae (Chlamydophila pneumoniae).